The following is a 72-amino-acid chain: V-type proton ATPase subunit e (72 aa).

Over 1 to 2 (MS) the chain is Lumenal. A helical transmembrane segment spans residues 3–23 (FYTVVATFLSVVLASAVFWVL). Residues 24–34 (APKENQTVWRS) lie on the Cytoplasmic side of the membrane. The chain crosses the membrane as a helical span at residues 35–55 (TIILSMSMMFLMWAVTYLSQL). Residues 56 to 72 (HPLVVPRRSDLRPEFAE) are Lumenal-facing.

It belongs to the V-ATPase e1/e2 subunit family. In terms of assembly, V-ATPase is a heteromultimeric enzyme composed of a peripheral catalytic V1 complex (components A to H) attached to an integral membrane V0 proton pore complex (components: a, c, c', c'', d, e, f and VOA1).

It is found in the vacuole membrane. Its function is as follows. Subunit of the V0 complex of vacuolar(H+)-ATPase (V-ATPase), a multisubunit enzyme composed of a peripheral complex (V1) that hydrolyzes ATP and a membrane integral complex (V0) that translocates protons. V-ATPase is responsible for acidifying and maintaining the pH of intracellular compartments. The chain is V-type proton ATPase subunit e (VMA9) from Eremothecium gossypii (strain ATCC 10895 / CBS 109.51 / FGSC 9923 / NRRL Y-1056) (Yeast).